The primary structure comprises 298 residues: Small ribosomal subunit biogenesis GTPase RsgA (298 aa).

The CP-type G domain maps to 67-228 (TNELIRPPIC…VADTPGFSSL (162 aa)). 116–119 (TKMD) provides a ligand contact to GTP. T166 is subject to Phosphothreonine. 171-179 (GQSGVGKSS) contacts GTP. C252, C257, H259, and C265 together coordinate Zn(2+).

The protein belongs to the TRAFAC class YlqF/YawG GTPase family. RsgA subfamily. Monomer, but able to form dimers. Associates with 30S ribosomal subunit; a phospho-mimetic mutation increases association. Probably binds 16S rRNA. The cofactor is Zn(2+). In vitro phosphorylated mostly on Thr (with lower signal on Ser) by PrkC in the presence of poly-L-Lys or myelin basic protein, dephosphorylated by PrpC. Most in vitro phosphorylation occurs on Thr-166, in vivo phosphorylation has not been detected, but it might vary during the cell cycle.

The protein localises to the cytoplasm. In terms of biological role, one of several proteins that assist in the late maturation steps of the functional core of the 30S ribosomal subunit. Helps release RbfA from mature subunits. May play a role in the assembly of ribosomal proteins into the subunit. Circularly permuted GTPase with a low level of activity and slow catalytic turnover, does not act on ATP. GTPase activity is stimulated by the presence of 30S or 70S ribosomes, phosphorylation increases stimulation. Depletion results in increased sensitivity to protein synthesis inhibitors that block the peptide channel or peptidyl transferase center on the ribosome, suggesting this protein functions in conjunction with the ribosome in vivo. Decreasing levels of protein lead to an increase in free 30S and 50S ribosomal subunits and a decrease in assembled 70S ribosomes. Suggested to serve as a specific transcription factor for proteins involved in late stages of peptidoglycan synthesis. This is Small ribosomal subunit biogenesis GTPase RsgA from Bacillus subtilis (strain 168).